The following is a 151-amino-acid chain: Transcription antitermination protein NusB (151 aa).

The protein belongs to the NusB family.

Involved in transcription antitermination. Required for transcription of ribosomal RNA (rRNA) genes. Binds specifically to the boxA antiterminator sequence of the ribosomal RNA (rrn) operons. In Photobacterium profundum (strain SS9), this protein is Transcription antitermination protein NusB.